A 390-amino-acid chain; its full sequence is Chorismate synthase 1 (390 aa).

NADP(+)-binding residues include arginine 39 and arginine 45. The segment at 95–117 (EQEEKEMKRKVTKPRPGHADLNG) is disordered. FMN is bound by residues 132–134 (RSS), 253–254 (NA), glycine 298, 313–317 (KPIPT), and arginine 339.

Belongs to the chorismate synthase family. In terms of assembly, homotetramer. The cofactor is FMNH2.

It carries out the reaction 5-O-(1-carboxyvinyl)-3-phosphoshikimate = chorismate + phosphate. It functions in the pathway metabolic intermediate biosynthesis; chorismate biosynthesis; chorismate from D-erythrose 4-phosphate and phosphoenolpyruvate: step 7/7. Its function is as follows. Catalyzes the anti-1,4-elimination of the C-3 phosphate and the C-6 proR hydrogen from 5-enolpyruvylshikimate-3-phosphate (EPSP) to yield chorismate, which is the branch point compound that serves as the starting substrate for the three terminal pathways of aromatic amino acid biosynthesis. This reaction introduces a second double bond into the aromatic ring system. In Bacillus thuringiensis (strain Al Hakam), this protein is Chorismate synthase 1.